A 37-amino-acid chain; its full sequence is MKVMASVKRICRNCKVIKRHGVVRVICTDPRHKQRQG.

The protein belongs to the bacterial ribosomal protein bL36 family.

This is Large ribosomal subunit protein bL36 from Bordetella bronchiseptica (strain ATCC BAA-588 / NCTC 13252 / RB50) (Alcaligenes bronchisepticus).